Reading from the N-terminus, the 335-residue chain is Probable geranylgeranyl transferase type-2 subunit beta (335 aa).

PFTB repeat units lie at residues 74-115, 122-163, 170-211, 218-259, and 266-312; these read TEEI…IIFN, ADTI…HLLG, IDSA…AIAG, RDRT…AILG, and SDAM…DDTL. Geranylgeranyl diphosphate-binding positions include 196–198 and 238–250; these read HSG and RPEK…YSWW. Zn(2+)-binding residues include D244, C246, and H296.

It belongs to the protein prenyltransferase subunit beta family. As to quaternary structure, heterodimer of an alpha and a beta subunit. The cofactor is Zn(2+).

It catalyses the reaction geranylgeranyl diphosphate + L-cysteinyl-[protein] = S-geranylgeranyl-L-cysteinyl-[protein] + diphosphate. Catalyzes the transfer of a geranyl-geranyl moiety from geranyl-geranyl pyrophosphate to both cysteines in Rab proteins with an -XXCC, -XCXC and -CCXX C-terminal. The sequence is that of Probable geranylgeranyl transferase type-2 subunit beta (ggtb-1) from Caenorhabditis elegans.